Reading from the N-terminus, the 199-residue chain is Recombination protein RecR (199 aa).

The C4-type zinc finger occupies 58-73 (CKKCFNLTSEDECEIC). The Toprim domain maps to 81 to 175 (KLICVVAETK…KVTRIAYGLP (95 aa)).

This sequence belongs to the RecR family.

Its function is as follows. May play a role in DNA repair. It seems to be involved in an RecBC-independent recombinational process of DNA repair. It may act with RecF and RecO. The polypeptide is Recombination protein RecR (Prochlorococcus marinus (strain MIT 9301)).